The chain runs to 298 residues: Cyclin-dependent kinase 2 (298 aa).

Met1 carries the N-acetylmethionine modification. Positions 4–286 (FQKVEKIGEG…AKAALAHPFF (283 aa)) constitute a Protein kinase domain. An N6-acetyllysine modification is found at Lys6. 10–18 (IGEGTYGVV) lines the ATP pocket. Residue Thr14 is modified to Phosphothreonine. Phosphotyrosine; by WEE1 is present on Tyr15. Tyr19 bears the Phosphotyrosine mark. ATP-binding positions include Lys33, 81-83 (ELL), and Asp86. Residue Asp127 is the Proton acceptor of the active site. Residues 129-132 (KPQN) and Asp145 each bind ATP. Asn132 and Asp145 together coordinate Mg(2+). Thr160 carries the phosphothreonine; by CAK and CCRK modification.

The protein belongs to the protein kinase superfamily. CMGC Ser/Thr protein kinase family. CDC2/CDKX subfamily. As to quaternary structure, found in a complex with CABLES1, CCNA1 and CCNE1. Interacts with CABLES1. Interacts with UHRF2. Part of a complex consisting of UHRF2, CDK2 and CCNE1. Interacts with the Speedy/Ringo proteins SPDYA and SPDYC. Interaction with SPDYA promotes kinase activation via a conformation change that alleviates obstruction of the substrate-binding cleft by the T-loop. Found in a complex with both SPDYA and CDKN1B/KIP1. Binds to RB1 and CDK7. Binding to CDKN1A (p21) leads to CDK2/cyclin E inactivation at the G1-S phase DNA damage checkpoint, thereby arresting cells at the G1-S transition during DNA repair. Associated with PTPN6 and beta-catenin/CTNNB1. Interacts with CACUL1. May interact with CEP63. Interacts with ANKRD17. Interacts with CEBPA (when phosphorylated). Forms a ternary complex with CCNA2 and CDKN1B; CDKN1B inhibits the kinase activity of CDK2 through conformational rearrangements. Interacts with cyclins A, B1, B3, D, or E. Interacts with CDK2AP2. Mg(2+) is required as a cofactor. In terms of processing, phosphorylated at Thr-160 by CDK7 in a CAK complex. Phosphorylation at Thr-160 promotes kinase activity, whereas phosphorylation at Tyr-15 by WEE1 reduces slightly kinase activity. Phosphorylated on Thr-14 and Tyr-15 during S and G2 phases before being dephosphorylated by CDC25A. Nitrosylated after treatment with nitric oxide (DETA-NO).

The protein localises to the cytoplasm. It localises to the cytoskeleton. The protein resides in the microtubule organizing center. Its subcellular location is the centrosome. It is found in the nucleus. The protein localises to the cajal body. It localises to the endosome. It carries out the reaction L-seryl-[protein] + ATP = O-phospho-L-seryl-[protein] + ADP + H(+). The enzyme catalyses L-threonyl-[protein] + ATP = O-phospho-L-threonyl-[protein] + ADP + H(+). With respect to regulation, phosphorylation at Thr-14 or Tyr-15 inactivates the enzyme, while phosphorylation at Thr-160 activates it. Stimulated by MYC. Inactivated by CDKN1A (p21). Functionally, serine/threonine-protein kinase involved in the control of the cell cycle; essential for meiosis, but dispensable for mitosis. Phosphorylates CABLES1, CTNNB1, CDK2AP2, ERCC6, NBN, USP37, p53/TP53, NPM1, CDK7, RB1, BRCA2, MYC, NPAT, EZH2. Triggers duplication of centrosomes and DNA. Acts at the G1-S transition to promote the E2F transcriptional program and the initiation of DNA synthesis, and modulates G2 progression; controls the timing of entry into mitosis/meiosis by controlling the subsequent activation of cyclin B/CDK1 by phosphorylation, and coordinates the activation of cyclin B/CDK1 at the centrosome and in the nucleus. Crucial role in orchestrating a fine balance between cellular proliferation, cell death, and DNA repair in embryonic stem cells (ESCs). Activity of CDK2 is maximal during S phase and G2; activated by interaction with cyclin E during the early stages of DNA synthesis to permit G1-S transition, and subsequently activated by cyclin A2 (cyclin A1 in germ cells) during the late stages of DNA replication to drive the transition from S phase to mitosis, the G2 phase. EZH2 phosphorylation promotes H3K27me3 maintenance and epigenetic gene silencing. Cyclin E/CDK2 prevents oxidative stress-mediated Ras-induced senescence by phosphorylating MYC. Involved in G1-S phase DNA damage checkpoint that prevents cells with damaged DNA from initiating mitosis; regulates homologous recombination-dependent repair by phosphorylating BRCA2, this phosphorylation is low in S phase when recombination is active, but increases as cells progress towards mitosis. In response to DNA damage, double-strand break repair by homologous recombination a reduction of CDK2-mediated BRCA2 phosphorylation. Involved in regulation of telomere repair by mediating phosphorylation of NBN. Phosphorylation of RB1 disturbs its interaction with E2F1. NPM1 phosphorylation by cyclin E/CDK2 promotes its dissociation from unduplicated centrosomes, thus initiating centrosome duplication. Cyclin E/CDK2-mediated phosphorylation of NPAT at G1-S transition and until prophase stimulates the NPAT-mediated activation of histone gene transcription during S phase. Required for vitamin D-mediated growth inhibition by being itself inactivated. Involved in the nitric oxide- (NO) mediated signaling in a nitrosylation/activation-dependent manner. USP37 is activated by phosphorylation and thus triggers G1-S transition. CTNNB1 phosphorylation regulates insulin internalization. Phosphorylates FOXP3 and negatively regulates its transcriptional activity and protein stability. Phosphorylates ERCC6 which is essential for its chromatin remodeling activity at DNA double-strand breaks. Acts as a regulator of the phosphatidylinositol 3-kinase/protein kinase B signal transduction by mediating phosphorylation of the C-terminus of protein kinase B (PKB/AKT1 and PKB/AKT2), promoting its activation. This chain is Cyclin-dependent kinase 2 (CDK2), found in Mesocricetus auratus (Golden hamster).